We begin with the raw amino-acid sequence, 115 residues long: Large ribosomal subunit protein bL20c (115 aa).

It belongs to the bacterial ribosomal protein bL20 family.

Its subcellular location is the plastid. The protein resides in the chloroplast. Functionally, binds directly to 23S ribosomal RNA and is necessary for the in vitro assembly process of the 50S ribosomal subunit. It is not involved in the protein synthesizing functions of that subunit. The polypeptide is Large ribosomal subunit protein bL20c (Cycas taitungensis (Prince sago)).